The primary structure comprises 191 residues: Ribosome maturation factor RimP (191 aa).

The protein belongs to the RimP family.

It localises to the cytoplasm. Its function is as follows. Required for maturation of 30S ribosomal subunits. The protein is Ribosome maturation factor RimP of Caulobacter vibrioides (strain NA1000 / CB15N) (Caulobacter crescentus).